Consider the following 219-residue polypeptide: Inner membrane protein YghB (219 aa).

Over 1–17 the chain is Cytoplasmic; that stretch reads MAVIQDIIAALWQHDFA. The helical transmembrane segment at 18–38 threads the bilayer; that stretch reads ALADPHIVSVVYFVMFATLFL. At 39–67 the chain is on the periplasmic side; that stretch reads ENGLLPASFLPGDSLLILAGALIAQGVMD. The helical transmembrane segment at 68–88 threads the bilayer; the sequence is FLPTIAILTAAASLGCWLSYI. Residues 89–160 lie on the Cytoplasmic side of the membrane; sequence QGRWLGNTKT…RRFQFFNWLS (72 aa). A helical membrane pass occupies residues 161–181; that stretch reads GLLWVSVVTSFGYALSMIPFV. At 182–191 the chain is on the periplasmic side; it reads KRHEDQVMTF. The helical transmembrane segment at 192 to 212 threads the bilayer; sequence LMILPIALLTAGLLGTLFVVI. Topologically, residues 213-219 are cytoplasmic; that stretch reads KKKYCNA.

The protein belongs to the DedA family.

Its subcellular location is the cell inner membrane. The protein is Inner membrane protein YghB (yghB) of Escherichia coli O6:H1 (strain CFT073 / ATCC 700928 / UPEC).